Reading from the N-terminus, the 427-residue chain is Four-jointed box protein 1 (427 aa).

A signal peptide spans 1–18 (MRALSANLFAVLLMCALA). Residues asparagine 81, asparagine 244, and asparagine 270 are each glycosylated (N-linked (GlcNAc...) asparagine).

Its subcellular location is the secreted. Its function is as follows. May act as an inhibitor of dendrite extension and branching. The protein is Four-jointed box protein 1 (fjx1) of Xiphophorus maculatus (Southern platyfish).